A 391-amino-acid polypeptide reads, in one-letter code: Metal tolerance protein 7 (391 aa).

Residues 1–21 (MGSRGRRGGGERETETEEDET) form a disordered region. The Cytoplasmic segment spans residues 1–103 (MGSRGRRGGG…LRQMAKGERL (103 aa)). A helical transmembrane segment spans residues 104–124 (AINLSNIINLILFIGKVLASV). Residues 125-134 (ESLSMAVIAS) are Vacuolar-facing. A helical transmembrane segment spans residues 135 to 155 (TLDSLLDLLSGFILWFTAHAM). Over 156–171 (KKPNKYSYPIGKRRMQ) the chain is Cytoplasmic. A helical membrane pass occupies residues 172–192 (PVGIIVFASVMGTLGFQVLIE). At 193 to 210 (SGRQLITNEHQVFDHRKE) the chain is on the vacuolar side. A helical membrane pass occupies residues 211–231 (LWMIGSMSSVAVVKFFLMLYC). The Cytoplasmic segment spans residues 232–246 (RSFKNEIVRAYAQDH). The helical transmembrane segment at 247-264 (FFDVITNSVGLVSALLAV) threads the bilayer. The Vacuolar segment spans residues 265–266 (RY). A helical membrane pass occupies residues 267–287 (KWWMDPVGAILIAVYTITTWA). At 288 to 391 (RTVVENVGTL…THRPEHKAEV (104 aa)) the chain is on the cytoplasmic side.

It belongs to the cation diffusion facilitator (CDF) transporter (TC 2.A.4) family. SLC30A subfamily.

The protein localises to the vacuole membrane. Functionally, involved in sequestration of excess metal in the cytoplasm into vacuoles to maintain metal homeostasis. The polypeptide is Metal tolerance protein 7 (MTP7) (Oryza sativa subsp. japonica (Rice)).